We begin with the raw amino-acid sequence, 475 residues long: UDP-glycosyltransferase 101 (475 aa).

H15 functions as the Proton acceptor in the catalytic mechanism. Residue H15 participates in an anthocyanidin binding. The active-site Charge relay is the D117. UDP-alpha-D-glucose-binding residues include A345, Q347, H362, W365, N366, S367, and E370. Residue G385 coordinates an anthocyanidin. 2 residues coordinate UDP-alpha-D-glucose: E386 and Q387.

This sequence belongs to the UDP-glycosyltransferase family.

It carries out the reaction (20S)-protopanaxadiol + UDP-alpha-D-glucose = (20S)-ginsenoside C-K + UDP + H(+). It catalyses the reaction (20S)-ginsenoside Rg3 + UDP-alpha-D-glucose = (20S)-ginsenoside Rd + UDP + H(+). The enzyme catalyses (20S)-protopanaxatriol + UDP-alpha-D-glucose = (20S)-ginsenoside F1 + UDP + H(+). The catalysed reaction is (20S)-ginsenoside F1 + UDP-alpha-D-glucose = (20S)-ginsenoside Rg1 + UDP + H(+). It functions in the pathway secondary metabolite biosynthesis; terpenoid biosynthesis. Its function is as follows. Component of the dammarane-type triterpene saponins (e.g. ginsenosides or panaxosides) biosynthetic pathway. Glycosyltransferase that catalyzes the biosynthesis of ginsenoside F1 from protopanaxatriol (PPT) and the conversion of ginsenoside F1 to ginsenoside Rg1. Triggers C20-OH glycosylation of ginsenoside Rg3 to produce ginsenoside Rd. Mediates the conversion of protopanaxadiol (PPD) to the ginsenoside compound K. This is UDP-glycosyltransferase 101 from Panax ginseng (Korean ginseng).